A 407-amino-acid polypeptide reads, in one-letter code: Tryptophan synthase beta chain (407 aa).

The residue at position 91 (K91) is an N6-(pyridoxal phosphate)lysine.

Belongs to the TrpB family. Tetramer of two alpha and two beta chains. Requires pyridoxal 5'-phosphate as cofactor.

It catalyses the reaction (1S,2R)-1-C-(indol-3-yl)glycerol 3-phosphate + L-serine = D-glyceraldehyde 3-phosphate + L-tryptophan + H2O. Its pathway is amino-acid biosynthesis; L-tryptophan biosynthesis; L-tryptophan from chorismate: step 5/5. Its function is as follows. The beta subunit is responsible for the synthesis of L-tryptophan from indole and L-serine. The chain is Tryptophan synthase beta chain from Streptococcus pneumoniae (strain P1031).